Reading from the N-terminus, the 371-residue chain is Glutamate 5-kinase (371 aa).

Lysine 12 is an ATP binding site. Substrate-binding residues include serine 52, aspartate 136, and asparagine 148. Residues 168-169 (SD) and 210-216 (TGGMRTK) contribute to the ATP site. A PUA domain is found at 275 to 354 (QGEILVDEGA…EDIAEKFGYS (80 aa)).

The protein belongs to the glutamate 5-kinase family.

The protein localises to the cytoplasm. It catalyses the reaction L-glutamate + ATP = L-glutamyl 5-phosphate + ADP. The protein operates within amino-acid biosynthesis; L-proline biosynthesis; L-glutamate 5-semialdehyde from L-glutamate: step 1/2. Its function is as follows. Catalyzes the transfer of a phosphate group to glutamate to form L-glutamate 5-phosphate. This chain is Glutamate 5-kinase, found in Idiomarina loihiensis (strain ATCC BAA-735 / DSM 15497 / L2-TR).